The following is a 653-amino-acid chain: Eukaryotic translation initiation factor 4E-binding protein Mextli (653 aa).

In terms of domain architecture, KH spans 227 to 292; the sequence is YCKDEVVIRN…DKINYAKQLM (66 aa). 2 disordered regions span residues 311–335 and 515–570; these read VGGS…TPTG and EGDD…AGTN. Composition is skewed to low complexity over residues 314–323 and 525–536; these read SCSSLNSSNS and SNGGSSTSNQNG. The span at 546–563 shows a compositional bias: basic and acidic residues; sequence SRKESTPETKGAREKGDL.

As to quaternary structure, interacts with eukaryotic translation initiation factor eIF4E1. Also interacts with eukaryotic translation initiation factor 3 complex members eif3-S9/eif3b, Int6/eif3e and eIF-3p40/eif3h and with CG3225.

The protein localises to the cytoplasm. It is found in the cytoplasmic ribonucleoprotein granule. In terms of biological role, plays a role in promoting translation. In Drosophila melanogaster (Fruit fly), this protein is Eukaryotic translation initiation factor 4E-binding protein Mextli.